The chain runs to 89 residues: MALDQAKKAEIIAKYARGENDTGSTEVQVALLTERIKYLTDHLKTNKKDHSSRLGLLKLVGQRRRLMRYLKNTDLERWHTIKDALGIRN.

This sequence belongs to the universal ribosomal protein uS15 family. In terms of assembly, part of the 30S ribosomal subunit. Forms a bridge to the 50S subunit in the 70S ribosome, contacting the 23S rRNA.

Its function is as follows. One of the primary rRNA binding proteins, it binds directly to 16S rRNA where it helps nucleate assembly of the platform of the 30S subunit by binding and bridging several RNA helices of the 16S rRNA. In terms of biological role, forms an intersubunit bridge (bridge B4) with the 23S rRNA of the 50S subunit in the ribosome. This Sulfurovum sp. (strain NBC37-1) protein is Small ribosomal subunit protein uS15.